Consider the following 391-residue polypeptide: Processive diacylglycerol beta-glucosyltransferase (391 aa).

This sequence belongs to the glycosyltransferase 28 family. UgtP subfamily.

It localises to the cell membrane. The catalysed reaction is a 1,2-diacyl-3-O-(beta-D-glucopyranosyl)-sn-glycerol + UDP-alpha-D-glucose = a 1,2-diacyl-3-O-(beta-D-Glc-(1-&gt;6)-beta-D-Glc)-sn-glycerol + UDP + H(+). It catalyses the reaction a 1,2-diacyl-sn-glycerol + UDP-alpha-D-glucose = a 1,2-diacyl-3-O-(beta-D-glucopyranosyl)-sn-glycerol + UDP + H(+). The protein operates within glycolipid metabolism; diglucosyl-diacylglycerol biosynthesis. In terms of biological role, processive glucosyltransferase involved in the biosynthesis of both the bilayer- and non-bilayer-forming membrane glucolipids. Is able to successively transfer two glucosyl residues to diacylglycerol (DAG), thereby catalyzing the formation of beta-monoglucosyl-DAG (3-O-(beta-D-glucopyranosyl)-1,2-diacyl-sn-glycerol) and beta-diglucosyl-DAG (3-O-(beta-D-glucopyranosyl-beta-(1-&gt;6)-D-glucopyranosyl)-1,2-diacyl-sn-glycerol). Beta-diglucosyl-DAG is the predominant glycolipid found in Bacillales and is also used as a membrane anchor for lipoteichoic acid (LTA). In Staphylococcus aureus (strain MRSA252), this protein is Processive diacylglycerol beta-glucosyltransferase.